A 592-amino-acid polypeptide reads, in one-letter code: Syntaxin-binding protein 3 (592 aa).

Residues 1–255 (MAPPVAERGL…STVLHELTFQ (255 aa)) form a mediates interaction with DOC2B region.

It belongs to the STXBP/unc-18/SEC1 family. In terms of assembly, interacts with DOC2B; the interaction is direct, occurs at the cell membrane, excludes interaction with STX4 and regulates glucose-stimulated insulin secretion. Interacts with STX4. In terms of processing, phosphorylated by PKC in platelets in response to thrombin stimulation; phosphorylation inhibits binding to STX4. In terms of tissue distribution, megakaryocytes and platelets.

The protein localises to the cytoplasm. It is found in the cytosol. Its subcellular location is the cell membrane. In terms of biological role, together with STX4 and VAMP2, may play a role in insulin-dependent movement of GLUT4 and in docking/fusion of intracellular GLUT4-containing vesicles with the cell surface in adipocytes. The protein is Syntaxin-binding protein 3 (STXBP3) of Homo sapiens (Human).